The primary structure comprises 469 residues: Spermatogenesis-associated protein 21 (469 aa).

2 disordered regions span residues Met-1–Gln-76 and His-99–Pro-157. A compositionally biased stretch (basic and acidic residues) spans Glu-49–Arg-61. A compositionally biased stretch (low complexity) spans Ala-62–Ala-73. Over residues Ala-105–Ala-132 the composition is skewed to polar residues. Residues Ala-146–Pro-157 show a composition bias toward pro residues. Residues Glu-198–Ala-225 are a coiled coil. Positions Val-255–Phe-290 constitute an EF-hand domain. Residues Asp-268, Asn-270, Asp-272, Arg-274, and Asp-279 each coordinate Ca(2+). Residues Tyr-424–His-469 are disordered. Basic and acidic residues predominate over residues Asn-450–Lys-459.

Its function is as follows. Involved in the differentiation of haploid spermatids. The polypeptide is Spermatogenesis-associated protein 21 (SPATA21) (Homo sapiens (Human)).